The following is a 354-amino-acid chain: Uroporphyrinogen decarboxylase (354 aa).

Residues 30 to 34 (RQAGR), Phe49, Asp79, Tyr156, Ser211, and His326 each bind substrate.

The protein belongs to the uroporphyrinogen decarboxylase family. In terms of assembly, homodimer.

The protein resides in the cytoplasm. It carries out the reaction uroporphyrinogen III + 4 H(+) = coproporphyrinogen III + 4 CO2. Its pathway is porphyrin-containing compound metabolism; protoporphyrin-IX biosynthesis; coproporphyrinogen-III from 5-aminolevulinate: step 4/4. In terms of biological role, catalyzes the decarboxylation of four acetate groups of uroporphyrinogen-III to yield coproporphyrinogen-III. The protein is Uroporphyrinogen decarboxylase of Salinibacter ruber (strain DSM 13855 / M31).